The following is a 247-amino-acid chain: Tetraspanin-18 (247 aa).

The Cytoplasmic portion of the chain corresponds to Met-1–Leu-15. A helical membrane pass occupies residues Phe-16–Val-36. Residues Asp-37–Pro-49 are Extracellular-facing. The chain crosses the membrane as a helical span at residues Leu-50–Phe-70. Residues Leu-71–Cys-82 are Cytoplasmic-facing. Residues Leu-83–Ile-103 traverse the membrane as a helical segment. The Extracellular segment spans residues Leu-104–Gly-222. N-linked (GlcNAc...) asparagine glycosylation is found at Asn-111 and Asn-129. A helical membrane pass occupies residues Ala-223–Phe-243. At Arg-244–Gln-247 the chain is on the cytoplasmic side.

This sequence belongs to the tetraspanin (TM4SF) family.

It localises to the membrane. Its function is as follows. Maintains CDH6 protein and promotes CDH6-dependent adherens junctions, inhibiting neural crest migration. The sequence is that of Tetraspanin-18 from Gallus gallus (Chicken).